The primary structure comprises 59 residues: MDKKLLEILVCPLCKGKLLFKKQELICKFDRLAFPVRDDIPVMLEQEARLIPLEEKDKL.

This sequence belongs to the UPF0434 family.

This is UPF0434 protein lpg1920 from Legionella pneumophila subsp. pneumophila (strain Philadelphia 1 / ATCC 33152 / DSM 7513).